We begin with the raw amino-acid sequence, 161 residues long: Putative 4-hydroxy-4-methyl-2-oxoglutarate aldolase (161 aa).

Residues 78-81 (GDVI) and Arg-100 contribute to the substrate site. Residue Asp-101 participates in a divalent metal cation binding.

This sequence belongs to the class II aldolase/RraA-like family. As to quaternary structure, homotrimer. Requires a divalent metal cation as cofactor.

The catalysed reaction is 4-hydroxy-4-methyl-2-oxoglutarate = 2 pyruvate. The enzyme catalyses oxaloacetate + H(+) = pyruvate + CO2. Catalyzes the aldol cleavage of 4-hydroxy-4-methyl-2-oxoglutarate (HMG) into 2 molecules of pyruvate. Also contains a secondary oxaloacetate (OAA) decarboxylase activity due to the common pyruvate enolate transition state formed following C-C bond cleavage in the retro-aldol and decarboxylation reactions. This Mycobacterium avium (strain 104) protein is Putative 4-hydroxy-4-methyl-2-oxoglutarate aldolase.